We begin with the raw amino-acid sequence, 372 residues long: N-methyl-L-tryptophan oxidase (372 aa).

Aspartate 4–histidine 34 is a binding site for FAD. S-8alpha-FAD cysteine is present on cysteine 308.

The protein belongs to the MSOX/MTOX family. MTOX subfamily. As to quaternary structure, monomer. Requires FAD as cofactor.

The enzyme catalyses N(alpha)-methyl-L-tryptophan + O2 + H2O = L-tryptophan + formaldehyde + H2O2. In terms of biological role, catalyzes the oxidative demethylation of N-methyl-L-tryptophan. This is N-methyl-L-tryptophan oxidase from Escherichia coli O81 (strain ED1a).